A 304-amino-acid chain; its full sequence is Cyclin-dependent kinase 3 (304 aa).

Residues F4–F286 form the Protein kinase domain. Residues I10 to V18 and K33 contribute to the ATP site. Catalysis depends on D127, which acts as the Proton acceptor.

The protein belongs to the protein kinase superfamily. CMGC Ser/Thr protein kinase family. CDC2/CDKX subfamily. As to quaternary structure, interacts with CABLES1 and ATF1. Binding to CCNC/cyclin-C promotes RB1 phosphorylation. Binds to CABLES2.

The catalysed reaction is L-seryl-[protein] + ATP = O-phospho-L-seryl-[protein] + ADP + H(+). It catalyses the reaction L-threonyl-[protein] + ATP = O-phospho-L-threonyl-[protein] + ADP + H(+). Functionally, serine/threonine-protein kinase that plays a critical role in the control of the eukaryotic cell cycle; involved in G0-G1 and G1-S cell cycle transitions. Interacts with CCNC/cyclin-C during interphase. Phosphorylates histone H1, ATF1, RB1 and CABLES1. ATF1 phosphorylation triggers ATF1 transactivation and transcriptional activities, and promotes cell proliferation and transformation. CDK3/cyclin-C mediated RB1 phosphorylation is required for G0-G1 transition. Promotes G1-S transition probably by contributing to the activation of E2F1, E2F2 and E2F3 in a RB1-independent manner. This Mus musculus (Mouse) protein is Cyclin-dependent kinase 3 (Cdk3).